Consider the following 1058-residue polypeptide: Carbamoyl phosphate synthase large chain (1058 aa).

The carboxyphosphate synthetic domain stretch occupies residues 1-401 (MPKRKDIQKI…SLLKACRSLE (401 aa)). The ATP site is built by arginine 129, arginine 169, glycine 175, glycine 176, arginine 208, isoleucine 210, glutamate 215, glycine 241, isoleucine 242, histidine 243, glutamine 284, and glutamate 298. The 195-residue stretch at 133 to 327 (KQLMQELDQP…IAKLAAKIAV (195 aa)) folds into the ATP-grasp 1 domain. Mg(2+)-binding residues include glutamine 284, glutamate 298, and asparagine 300. The Mn(2+) site is built by glutamine 284, glutamate 298, and asparagine 300. The interval 402 to 546 (IGVCHNEMTS…YSTYELENES (145 aa)) is oligomerization domain. The tract at residues 547-929 (VQSNKESILV…ALYKAFEANN (383 aa)) is carbamoyl phosphate synthetic domain. Residues 671-861 (EKALKELGIP…MAQIATKLIL (191 aa)) enclose the ATP-grasp 2 domain. ATP is bound by residues arginine 707, serine 746, isoleucine 748, glutamate 752, glycine 777, valine 778, histidine 779, serine 780, glutamine 820, and glutamate 832. Glutamine 820, glutamate 832, and asparagine 834 together coordinate Mg(2+). Positions 820, 832, and 834 each coordinate Mn(2+). One can recognise an MGS-like domain in the interval 930 to 1058 (SHLSEFGQIV…ESRCFNIEAI (129 aa)). The interval 930 to 1058 (SHLSEFGQIV…ESRCFNIEAI (129 aa)) is allosteric domain.

It belongs to the CarB family. In terms of assembly, composed of two chains; the small (or glutamine) chain promotes the hydrolysis of glutamine to ammonia, which is used by the large (or ammonia) chain to synthesize carbamoyl phosphate. Tetramer of heterodimers (alpha,beta)4. The cofactor is Mg(2+). Mn(2+) is required as a cofactor.

It catalyses the reaction hydrogencarbonate + L-glutamine + 2 ATP + H2O = carbamoyl phosphate + L-glutamate + 2 ADP + phosphate + 2 H(+). It carries out the reaction hydrogencarbonate + NH4(+) + 2 ATP = carbamoyl phosphate + 2 ADP + phosphate + 2 H(+). It participates in amino-acid biosynthesis; L-arginine biosynthesis; carbamoyl phosphate from bicarbonate: step 1/1. It functions in the pathway pyrimidine metabolism; UMP biosynthesis via de novo pathway; (S)-dihydroorotate from bicarbonate: step 1/3. Its function is as follows. Large subunit of the glutamine-dependent carbamoyl phosphate synthetase (CPSase). CPSase catalyzes the formation of carbamoyl phosphate from the ammonia moiety of glutamine, carbonate, and phosphate donated by ATP, constituting the first step of 2 biosynthetic pathways, one leading to arginine and/or urea and the other to pyrimidine nucleotides. The large subunit (synthetase) binds the substrates ammonia (free or transferred from glutamine from the small subunit), hydrogencarbonate and ATP and carries out an ATP-coupled ligase reaction, activating hydrogencarbonate by forming carboxy phosphate which reacts with ammonia to form carbamoyl phosphate. This chain is Carbamoyl phosphate synthase large chain, found in Streptococcus pyogenes serotype M3 (strain ATCC BAA-595 / MGAS315).